Here is a 398-residue protein sequence, read N- to C-terminus: FK506-binding protein 4 (398 aa).

Disordered regions lie at residues 66 to 120 (EVDE…DEYE), 164 to 232 (VKHP…QLAK), and 245 to 288 (DLIA…KKNK). Positions 170–228 (EPLEDLYSDEDSEEYSDDELDQEIEEDDELDHDEASSEESDEDQEFYDAISEGDEDIDE) are enriched in acidic residues. Residues 264–287 (PETKKSKKTKDEKNTKATENEKKN) show a composition bias toward basic and acidic residues. The PPIase FKBP-type domain occupies 312–398 (GSKVGMRYIG…TFDVKLVSLK (87 aa)).

Belongs to the FKBP-type PPIase family. FKBP3/4 subfamily. As to quaternary structure, binds to histones H3 and H4.

Its subcellular location is the nucleus. It carries out the reaction [protein]-peptidylproline (omega=180) = [protein]-peptidylproline (omega=0). Its activity is regulated as follows. Inhibited by both FK506 and rapamycin. Functionally, PPIase that acts as a histone chaperone. Histone proline isomerase that increases the rate of cis-trans isomerization at prolines on the histone H3 N-terminal tail. Proline isomerization influences H3 methylation thereby regulating gene expression. The protein is FK506-binding protein 4 (FPR4) of Candida glabrata (strain ATCC 2001 / BCRC 20586 / JCM 3761 / NBRC 0622 / NRRL Y-65 / CBS 138) (Yeast).